A 190-amino-acid polypeptide reads, in one-letter code: Corticoliberin (190 aa).

The N-terminal stretch at 1-24 is a signal peptide; the sequence is MRLPLLVSVGVLLVALLPSPPCRA. A propeptide spanning residues 25–147 is cleaved from the precursor; that stretch reads LLSRGPIPGA…QEAPAARKRR (123 aa). Disordered regions lie at residues 33-53 and 115-151; these read GARQ…LPQP and PRRP…SQEP. Residues 41–53 are compositionally biased toward low complexity; it reads PQPLSFFQPLPQP. Ala-188 carries the alanine amide modification.

This sequence belongs to the sauvagine/corticotropin-releasing factor/urotensin I family. In terms of assembly, interacts (via C-terminus) with CRFR1 (via N-terminal extracellular domain). In terms of tissue distribution, produced by the hypothalamus.

The protein resides in the secreted. Its function is as follows. Hormone regulating the release of corticotropin from pituitary gland. Induces NLRP6 in intestinal epithelial cells, hence may influence gut microbiota profile. In Ovis aries (Sheep), this protein is Corticoliberin (CRH).